Reading from the N-terminus, the 576-residue chain is Glucoamylase ARB_02327-1 (576 aa).

A signal peptide spans 1–20; that stretch reads MGLASTVSLALLGLCSLARA. Trp-141 lines the substrate pocket. Residues Asn-168 and Asn-192 are each glycosylated (N-linked (GlcNAc...) asparagine). Catalysis depends on Asp-197, which acts as the Proton acceptor. Catalysis depends on Glu-200, which acts as the Proton donor. Intrachain disulfides connect Cys-243/Cys-470 and Cys-285/Cys-293. One can recognise a CBM20 domain in the interval 477 to 576; the sequence is GSGGDTVAVT…GSFTQNDTWR (100 aa). A disordered region spans residues 552-576; the sequence is TWESDPNRSITTSASGSFTQNDTWR. N-linked (GlcNAc...) asparagine glycosylation is found at Asn-558 and Asn-572.

It belongs to the glycosyl hydrolase 15 family.

The protein resides in the secreted. It catalyses the reaction Hydrolysis of terminal (1-&gt;4)-linked alpha-D-glucose residues successively from non-reducing ends of the chains with release of beta-D-glucose.. The polypeptide is Glucoamylase ARB_02327-1 (Schizophyllum commune (strain H4-8 / FGSC 9210) (Split gill fungus)).